A 434-amino-acid chain; its full sequence is UPF0053 protein YrkA (434 aa).

The region spanning 1-201 (MTTINLIIFT…YKSGEINQNE (201 aa)) is the CNNM transmembrane domain. 3 consecutive transmembrane segments (helical) span residues 7 to 27 (IIFT…FAIV), 64 to 84 (LGIT…FEVI), and 101 to 121 (VLIL…VGEL). CBS domains lie at 220-282 (MIPR…KIKE) and 289-346 (HINP…IRDE).

Belongs to the UPF0053 family.

The protein resides in the cell membrane. In Bacillus subtilis (strain 168), this protein is UPF0053 protein YrkA (yrkA).